Reading from the N-terminus, the 806-residue chain is Leucine--tRNA ligase (806 aa).

Positions Pro40 to His51 match the 'HIGH' region motif. The 'KMSKS' region motif lies at Lys576–Ser580. Lys579 contacts ATP.

Belongs to the class-I aminoacyl-tRNA synthetase family.

It is found in the cytoplasm. It catalyses the reaction tRNA(Leu) + L-leucine + ATP = L-leucyl-tRNA(Leu) + AMP + diphosphate. The polypeptide is Leucine--tRNA ligase (Chlorobium phaeobacteroides (strain BS1)).